The primary structure comprises 314 residues: Ribosomal protein L11 methyltransferase (314 aa).

T161, G182, D204, and N248 together coordinate S-adenosyl-L-methionine.

The protein belongs to the methyltransferase superfamily. PrmA family.

It localises to the cytoplasm. It catalyses the reaction L-lysyl-[protein] + 3 S-adenosyl-L-methionine = N(6),N(6),N(6)-trimethyl-L-lysyl-[protein] + 3 S-adenosyl-L-homocysteine + 3 H(+). Its function is as follows. Methylates ribosomal protein L11. The polypeptide is Ribosomal protein L11 methyltransferase (Listeria monocytogenes serotype 4b (strain CLIP80459)).